Reading from the N-terminus, the 422-residue chain is COUP transcription factor 1 (422 aa).

The disordered stretch occupies residues 1 to 80 (MAMVVSSWRD…QGPPGSGQSQ (80 aa)). Positions 39-66 (EQQQAGSGAPHTPQTPGQPGAPATPGTQ) are enriched in low complexity. The nuclear receptor DNA-binding region spans 82 to 157 (HIECVVCGDK…VGMRREAVQR (76 aa)). NR C4-type zinc fingers lie at residues 85–105 (CVVC…CEGC) and 121–145 (CRAN…LKKC). The region spanning 183–409 (YLSGYISLLL…TLIRDMLLSG (227 aa)) is the NR LBD domain. The interval 343-422 (LQEKSQCALE…NWPYMSIQCS (80 aa)) is important for dimerization.

This sequence belongs to the nuclear hormone receptor family. NR2 subfamily. In terms of assembly, binds DNA as dimer; homodimer and probable heterodimer with NR2F6. Interacts with GTF2B; this interaction is direct. Interacts with COPS2.

The protein resides in the nucleus. In terms of biological role, coup (chicken ovalbumin upstream promoter) transcription factor binds to the ovalbumin promoter and, in conjunction with another protein (S300-II) stimulates initiation of transcription. Binds to both direct repeats and palindromes of the 5'-AGGTCA-3' motif. Represses transcriptional activity of LHCG. This is COUP transcription factor 1 (Nr2f1) from Mus musculus (Mouse).